A 252-amino-acid chain; its full sequence is Type II secretion system protein N (252 aa).

The Cytoplasmic portion of the chain corresponds to 1–4; it reads MKQK. A helical transmembrane segment spans residues 5-25; it reads VLIAALFLVAYLGFLLVKLPA. Over 26 to 252 the chain is Periplasmic; the sequence is TLVVRHLPLP…RFPLRYQGRI (227 aa).

This sequence belongs to the GSP N family.

The protein resides in the cell inner membrane. Its function is as follows. Involved in a type II secretion system (T2SS, formerly general secretion pathway, GSP) for the export of proteins. The polypeptide is Type II secretion system protein N (exeN) (Aeromonas hydrophila).